The chain runs to 260 residues: Small ribosomal subunit protein uS2 (260 aa).

A disordered region spans residues 225–260; the sequence is KGQTQTEAAPNAQAAPEAAAPAEQPAEEAAAASSEG. Low complexity predominate over residues 231–260; that stretch reads EAAPNAQAAPEAAAPAEQPAEEAAAASSEG.

This sequence belongs to the universal ribosomal protein uS2 family.

The sequence is that of Small ribosomal subunit protein uS2 from Rhodopirellula baltica (strain DSM 10527 / NCIMB 13988 / SH1).